The chain runs to 138 residues: MEQTFFMIKPDGVKRGFIGEVISRIERRGFSIDRLEVRHADADILKRHYAELTDRPFFPTLVDYMTSGPVIIEVISGEEVISTWRTMMGSTNPKDALPGTIRGDFAQAPSPNQATCNIVHGSDSPESATREIAIWFNN.

ATP is bound by residues Lys-9, Phe-57, Arg-85, Thr-91, Arg-102, and Asn-112. Catalysis depends on His-120, which acts as the Pros-phosphohistidine intermediate.

Belongs to the NDK family. In terms of assembly, homotetramer. The cofactor is Mg(2+).

The protein localises to the cytoplasm. It catalyses the reaction a 2'-deoxyribonucleoside 5'-diphosphate + ATP = a 2'-deoxyribonucleoside 5'-triphosphate + ADP. The enzyme catalyses a ribonucleoside 5'-diphosphate + ATP = a ribonucleoside 5'-triphosphate + ADP. Major role in the synthesis of nucleoside triphosphates other than ATP. The ATP gamma phosphate is transferred to the NDP beta phosphate via a ping-pong mechanism, using a phosphorylated active-site intermediate. The protein is Nucleoside diphosphate kinase of Streptococcus agalactiae serotype III (strain NEM316).